The sequence spans 204 residues: Protein GrpE (204 aa).

Positions 1 to 12 (MSNQEKKMHEEE) are enriched in basic and acidic residues. The disordered stretch occupies residues 1–37 (MSNQEKKMHEEELQQQETVEADTEAEAEAVGTDADIE).

It belongs to the GrpE family. As to quaternary structure, homodimer.

The protein localises to the cytoplasm. Its function is as follows. Participates actively in the response to hyperosmotic and heat shock by preventing the aggregation of stress-denatured proteins, in association with DnaK and GrpE. It is the nucleotide exchange factor for DnaK and may function as a thermosensor. Unfolded proteins bind initially to DnaJ; upon interaction with the DnaJ-bound protein, DnaK hydrolyzes its bound ATP, resulting in the formation of a stable complex. GrpE releases ADP from DnaK; ATP binding to DnaK triggers the release of the substrate protein, thus completing the reaction cycle. Several rounds of ATP-dependent interactions between DnaJ, DnaK and GrpE are required for fully efficient folding. The chain is Protein GrpE from Vibrio proteolyticus (Aeromonas proteolytica).